The chain runs to 332 residues: tRNA N6-adenosine threonylcarbamoyltransferase (332 aa).

Fe cation-binding residues include histidine 107 and histidine 111. Substrate-binding positions include 129–133 (LVSGG), aspartate 162, glycine 175, and asparagine 267. Fe cation is bound at residue aspartate 295.

Belongs to the KAE1 / TsaD family. It depends on Fe(2+) as a cofactor.

The protein localises to the cytoplasm. The enzyme catalyses L-threonylcarbamoyladenylate + adenosine(37) in tRNA = N(6)-L-threonylcarbamoyladenosine(37) in tRNA + AMP + H(+). Its function is as follows. Required for the formation of a threonylcarbamoyl group on adenosine at position 37 (t(6)A37) in tRNAs that read codons beginning with adenine. Is involved in the transfer of the threonylcarbamoyl moiety of threonylcarbamoyl-AMP (TC-AMP) to the N6 group of A37, together with TsaE and TsaB. TsaD likely plays a direct catalytic role in this reaction. In Campylobacter hominis (strain ATCC BAA-381 / DSM 21671 / CCUG 45161 / LMG 19568 / NCTC 13146 / CH001A), this protein is tRNA N6-adenosine threonylcarbamoyltransferase.